Here is a 222-residue protein sequence, read N- to C-terminus: Latexin (222 aa).

One can recognise a Cystatin LXN-type 1 domain in the interval M1–K97. At K55 the chain carries N6-acetyllysine. The interval N98–L117 is alpha-helical linker. The region spanning E118 to E222 is the Cystatin LXN-type 2 domain.

This sequence belongs to the protease inhibitor I47 (latexin) family. Highly expressed in heart, prostate, ovary, kidney, pancreas, and colon, moderate or low in other tissues including brain.

The protein localises to the cytoplasm. Hardly reversible, non-competitive, and potent inhibitor of CPA1, CPA2 and CPA4. May play a role in inflammation. The protein is Latexin (LXN) of Homo sapiens (Human).